The following is a 231-amino-acid chain: 5'-methylthioadenosine/S-adenosylhomocysteine nucleosidase (231 aa).

Catalysis depends on glutamate 12, which acts as the Proton acceptor. Substrate contacts are provided by residues glycine 78, methionine 153, and 174-175 (ME). The active-site Proton donor is aspartate 198.

It belongs to the PNP/UDP phosphorylase family. MtnN subfamily.

It catalyses the reaction S-adenosyl-L-homocysteine + H2O = S-(5-deoxy-D-ribos-5-yl)-L-homocysteine + adenine. The catalysed reaction is S-methyl-5'-thioadenosine + H2O = 5-(methylsulfanyl)-D-ribose + adenine. The enzyme catalyses 5'-deoxyadenosine + H2O = 5-deoxy-D-ribose + adenine. It functions in the pathway amino-acid biosynthesis; L-methionine biosynthesis via salvage pathway; S-methyl-5-thio-alpha-D-ribose 1-phosphate from S-methyl-5'-thioadenosine (hydrolase route): step 1/2. In terms of biological role, catalyzes the irreversible cleavage of the glycosidic bond in both 5'-methylthioadenosine (MTA) and S-adenosylhomocysteine (SAH/AdoHcy) to adenine and the corresponding thioribose, 5'-methylthioribose and S-ribosylhomocysteine, respectively. Also cleaves 5'-deoxyadenosine, a toxic by-product of radical S-adenosylmethionine (SAM) enzymes, into 5-deoxyribose and adenine. The chain is 5'-methylthioadenosine/S-adenosylhomocysteine nucleosidase from Bacillus thuringiensis subsp. konkukian (strain 97-27).